The following is a 518-amino-acid chain: Ent-cassadiene hydroxylase (518 aa).

A helical membrane pass occupies residues 6-26; sequence LILALGLSVLFVLLSKLVSSA. Residue C451 participates in heme binding.

The protein belongs to the cytochrome P450 family. Heme serves as cofactor.

The protein resides in the membrane. The enzyme catalyses ent-cassa-12,15-diene + 3 reduced [NADPH--hemoprotein reductase] + 3 O2 = ent-3beta-hydroxycassa-12,15-dien-2-one + 3 oxidized [NADPH--hemoprotein reductase] + 4 H2O + 3 H(+). Enzyme of the diterpenoid metabolism involved in the biosynthesis of antibacterial oryzalides such as phytocassane. Catalyzes the hydroxylation of ent-cassa-12,15-diene to form ent-3beta-hydroxycassa-12,15-dien-2-one. This chain is Ent-cassadiene hydroxylase (CYP71Z7), found in Oryza sativa subsp. japonica (Rice).